Reading from the N-terminus, the 157-residue chain is UPF0254 protein MTH_1148 (157 aa).

The protein belongs to the UPF0254 family.

The polypeptide is UPF0254 protein MTH_1148 (Methanothermobacter thermautotrophicus (strain ATCC 29096 / DSM 1053 / JCM 10044 / NBRC 100330 / Delta H) (Methanobacterium thermoautotrophicum)).